The chain runs to 874 residues: Alanine--tRNA ligase (874 aa).

His-562, His-566, Cys-665, and His-669 together coordinate Zn(2+).

This sequence belongs to the class-II aminoacyl-tRNA synthetase family. Requires Zn(2+) as cofactor.

The protein localises to the cytoplasm. It catalyses the reaction tRNA(Ala) + L-alanine + ATP = L-alanyl-tRNA(Ala) + AMP + diphosphate. Functionally, catalyzes the attachment of alanine to tRNA(Ala) in a two-step reaction: alanine is first activated by ATP to form Ala-AMP and then transferred to the acceptor end of tRNA(Ala). Also edits incorrectly charged Ser-tRNA(Ala) and Gly-tRNA(Ala) via its editing domain. The protein is Alanine--tRNA ligase of Pseudomonas putida (strain W619).